A 348-amino-acid chain; its full sequence is GMP reductase (348 aa).

Residue 108-131 participates in NADP(+) binding; the sequence is ADFIKLRQILALSPSLKFICIDVA. Residues G181 and G183 each coordinate K(+). C186 (thioimidate intermediate) is an active-site residue. 216 to 239 contacts NADP(+); the sequence is IVSDGGCTMPGDVAKAFGGGADFV.

This sequence belongs to the IMPDH/GMPR family. GuaC type 1 subfamily. Homotetramer.

It catalyses the reaction IMP + NH4(+) + NADP(+) = GMP + NADPH + 2 H(+). In terms of biological role, catalyzes the irreversible NADPH-dependent deamination of GMP to IMP. It functions in the conversion of nucleobase, nucleoside and nucleotide derivatives of G to A nucleotides, and in maintaining the intracellular balance of A and G nucleotides. In Edwardsiella ictaluri (strain 93-146), this protein is GMP reductase.